The chain runs to 252 residues: Curing of [URE3] protein 1 (252 aa).

The protein localises to the nucleus. Its function is as follows. Involved in the curing of prion [URE3]. Nuclear localization of this protein may suggest a role in transcription regulation, so it might exert an effect on [URE3] through known prion-curing chaperones or BTN2. The polypeptide is Curing of [URE3] protein 1 (CUR1) (Saccharomyces cerevisiae (strain ATCC 204508 / S288c) (Baker's yeast)).